The sequence spans 370 residues: Small ribosomal subunit biogenesis GTPase RsgA 1 (370 aa).

Residues Gln97–Pro255 form the CP-type G domain. GTP is bound by residues Asn146–Asp149 and Gly197–Ser205. The Zn(2+) site is built by Cys280, Cys285, His287, and Cys293. The tract at residues Pro325–Glu370 is disordered.

This sequence belongs to the TRAFAC class YlqF/YawG GTPase family. RsgA subfamily. Monomer. Associates with 30S ribosomal subunit, binds 16S rRNA. Zn(2+) serves as cofactor.

Its subcellular location is the cytoplasm. In terms of biological role, one of several proteins that assist in the late maturation steps of the functional core of the 30S ribosomal subunit. Helps release RbfA from mature subunits. May play a role in the assembly of ribosomal proteins into the subunit. Circularly permuted GTPase that catalyzes slow GTP hydrolysis, GTPase activity is stimulated by the 30S ribosomal subunit. This is Small ribosomal subunit biogenesis GTPase RsgA 1 from Nostoc sp. (strain PCC 7120 / SAG 25.82 / UTEX 2576).